A 195-amino-acid polypeptide reads, in one-letter code: TM2 domain-containing protein C41D11.9 (195 aa).

Positions 1–20 (MLHKILFLICLASFIPTIGS) are cleaved as a signal peptide. At 21–136 (ISGTKDVKSK…NWSSGYSWTK (116 aa)) the chain is on the extracellular side. 3 N-linked (GlcNAc...) asparagine glycosylation sites follow: Asn55, Asn93, and Asn127. Residues 131 to 179 (GYSWTKTMILSVVLGGFGADRFYLGLWKSAIGKLFSFGGLGVWTLVDVV) form the TM2 domain. The chain crosses the membrane as a helical span at residues 137-157 (TMILSVVLGGFGADRFYLGLW). Over 158-163 (KSAIGK) the chain is Cytoplasmic. Residues 164-184 (LFSFGGLGVWTLVDVVLIAVG) traverse the membrane as a helical segment. At 185-195 (YIKPYDGSMYI) the chain is on the extracellular side.

Belongs to the TM2 family.

The protein localises to the membrane. The polypeptide is TM2 domain-containing protein C41D11.9 (Caenorhabditis elegans).